Here is a 407-residue protein sequence, read N- to C-terminus: Probable NADPH dehydrogenase (407 aa).

Residues Thr49 and Gln124 each contribute to the FMN site. 201–204 (HGAH) is a binding site for substrate. The active-site Proton donor is Tyr206. Residues Arg254 and Arg357 each coordinate FMN.

This sequence belongs to the NADH:flavin oxidoreductase/NADH oxidase family. FMN serves as cofactor.

The enzyme catalyses A + NADPH + H(+) = AH2 + NADP(+). Its function is as follows. Oxidoreductase that binds mammalian estrogens with high affinity. This is Probable NADPH dehydrogenase from Candida albicans (Yeast).